The sequence spans 165 residues: Small ribosomal subunit protein uS3m (165 aa).

Residues 1–30 (MNFLKKLLPQVATEVQQLSRSGFHTSSVCC) constitute a mitochondrion transit peptide.

The protein belongs to the universal ribosomal protein uS3 family. In terms of assembly, component of the mitochondrial ribosome small subunit (28S) which comprises a 12S rRNA and about 30 distinct proteins.

The protein resides in the mitochondrion. The chain is Small ribosomal subunit protein uS3m (mRpS24) from Drosophila melanogaster (Fruit fly).